Consider the following 131-residue polypeptide: UPF0146 protein PYRAB01940 (131 aa).

It belongs to the UPF0146 family.

The protein is UPF0146 protein PYRAB01940 of Pyrococcus abyssi (strain GE5 / Orsay).